The sequence spans 144 residues: MACAAARSPAEQDRFICIYPAYLNNKKTIAEGRRIPISKAVENPTATEIQDVCSAVGLNVFLEKNKMYSREWNRDVQYRGRVRVQLKQEDGSLCLVQFPSRKSVMLYAAEMIPKLKTRTQKTGGGDQSLQQGEGSKKGKGKKKK.

Residues 117 to 144 form a disordered region; sequence TRTQKTGGGDQSLQQGEGSKKGKGKKKK.

The protein belongs to the SRP19 family. As to quaternary structure, component of a signal recognition particle complex that consists of a 7SL RNA molecule of 300 nucleotides and six protein subunits: SRP72, SRP68, SRP54, SRP19, SRP14 and SRP9. Interacts with IPO5, IPO7, IPO8, KPNB1 and TNPO1. Interactions with IPO8 and TNPO1 may be involved in SRP19 import into the nucleus.

Its subcellular location is the cytoplasm. The protein localises to the nucleus. It is found in the nucleolus. The protein resides in the nucleoplasm. Functionally, component of the signal recognition particle (SRP) complex, a ribonucleoprotein complex that mediates the cotranslational targeting of secretory and membrane proteins to the endoplasmic reticulum (ER). Binds directly to 7SL RNA. Mediates binding of SRP54 to the SRP complex. This is Signal recognition particle 19 kDa protein from Canis lupus familiaris (Dog).